The sequence spans 102 residues: Small ribosomal subunit protein uS10c (102 aa).

The protein belongs to the universal ribosomal protein uS10 family. Part of the 30S ribosomal subunit.

The protein localises to the plastid. The protein resides in the chloroplast. In terms of biological role, involved in the binding of tRNA to the ribosomes. This is Small ribosomal subunit protein uS10c from Guillardia theta (Cryptophyte).